Consider the following 371-residue polypeptide: Probable diguanylate cyclase DgcC (371 aa).

The next 5 helical transmembrane spans lie at 46–66, 68–88, 112–132, 143–163, and 171–191; these read AVGL…HPPP, WWWL…WQIA, WVGV…IMCL, FVAG…LTGI, and PLEW…FGWV. The GGDEF domain occupies 240–371; sequence RDATLLIIDI…AGRNRTEVAA (132 aa). 2 residues coordinate Mg(2+): aspartate 248 and isoleucine 249. Substrate-binding residues include asparagine 256 and aspartate 265. Residue aspartate 291 participates in Mg(2+) binding.

Mg(2+) is required as a cofactor.

Its subcellular location is the cell inner membrane. It carries out the reaction 2 GTP = 3',3'-c-di-GMP + 2 diphosphate. The protein operates within purine metabolism; 3',5'-cyclic di-GMP biosynthesis. A probable diguanylate cyclase. The last member of a cascade of expressed proteins, its expression requires DgcM. DgcC production induces biosynthesis of cellulose in some E.coli isolates, but not in K12 strains. Cyclic-di-GMP is a second messenger which controls cell surface-associated traits in bacteria. The polypeptide is Probable diguanylate cyclase DgcC (Escherichia coli (strain K12)).